Here is an 88-residue protein sequence, read N- to C-terminus: Putative transposase InsN for insertion sequence element IS911B (88 aa).

The protein belongs to the transposase 8 family.

In terms of biological role, involved in the transposition of the insertion sequence IS911. This chain is Putative transposase InsN for insertion sequence element IS911B (insN2), found in Escherichia coli (strain K12).